The sequence spans 358 residues: Mesaconyl-CoA hydratase (358 aa).

The MaoC-like domain maps to 44–148; the sequence is AHDPGLRLTH…TSSSRPQYGI (105 aa).

Belongs to the enoyl-CoA hydratase/isomerase family.

It carries out the reaction (2R,3S)-beta-methylmalyl-CoA = 2-methylfumaryl-CoA + H2O. Involved in the methylaspartate cycle. Catalyzes the reversible hydration of mesaconyl-CoA (2-methylfumaryl-CoA) to yield beta-methylmalyl-CoA ((2R,3S)-beta-methylmalyl-CoA). The protein is Mesaconyl-CoA hydratase of Haloarcula marismortui (strain ATCC 43049 / DSM 3752 / JCM 8966 / VKM B-1809) (Halobacterium marismortui).